Consider the following 798-residue polypeptide: uncharacterized protein (798 aa).

The segment at 432–573 (KLTDNLSNKS…KNKAYRGRRV (142 aa)) is disordered. Composition is skewed to low complexity over residues 438 to 449 (SNKSSNDNTSET), 456 to 465 (RSSNSRNSDN), 473 to 487 (SKTQ…SRIP), and 495 to 510 (STNS…SDVY). Residues 519–529 (PSRSTYKSRTI) are compositionally biased toward polar residues. Residues 535–547 (ESSPVSSRTSSPV) show a composition bias toward low complexity. Residues 548 to 562 (DDSRLKQSRISEDKP) show a composition bias toward basic and acidic residues. Residues 563–572 (RKNKAYRGRR) are compositionally biased toward basic residues.

It localises to the virion. This is an uncharacterized protein from Acanthamoeba polyphaga (Amoeba).